Reading from the N-terminus, the 277-residue chain is tRNA pseudouridine synthase A (277 aa).

Catalysis depends on Asp-51, which acts as the Nucleophile. A substrate-binding site is contributed by Tyr-109.

Belongs to the tRNA pseudouridine synthase TruA family. As to quaternary structure, homodimer.

It catalyses the reaction uridine(38/39/40) in tRNA = pseudouridine(38/39/40) in tRNA. Functionally, formation of pseudouridine at positions 38, 39 and 40 in the anticodon stem and loop of transfer RNAs. The sequence is that of tRNA pseudouridine synthase A from Nitrosomonas eutropha (strain DSM 101675 / C91 / Nm57).